The sequence spans 680 residues: WD repeat-containing protein 48 homolog (680 aa).

WD repeat units lie at residues 26–65 (QHRN…SEKY), 71–110 (HHND…CMST), 113–152 (THRD…ALTA), 164–203 (GSKD…RSMK), 206–245 (GHTE…CVQT), 248–287 (VHKE…NKTL), 290–329 (EEKA…RGTL), and 350–389 (KGGA…KKDT). The tract at residues 594–618 (TPSGANANNSLQNSQSDGNSEGSQL) is disordered. Residues 596–609 (SGANANNSLQNSQS) show a composition bias toward low complexity.

It belongs to the WD repeat WDR48 family. As to quaternary structure, catalytic component of the Usp12-46 deubiquitylase complex consisting of Usp12-46, Wdr20 and Uaf1; regulatory subunit that, together wtih Wdr20, stabilizes Usp12-46. The Usp12-46 deubiquitylase complex associates with arr/arrow; the interaction leads to deubiquitination and stabilization of arr/arrow.

Functionally, regulatory component of the Usp12-46 deubiquitylase complex. activates deubiquitination by increasing the catalytic turnover without increasing the affinity of deubiquitinating enzymes for the substrate. The complex deubiquitylates the wg/wingless-signaling receptor arr/arrow, which stabilizes the receptor and increases its concentration at the cell surface; this enhances the sensitivity of cells to wg/wingless-signal stimulation. This increases the amplitude and spatial range of the signaling response to the wg/wingless morphogen gradient, facilitating the precise concentration-dependent regulation of its target genes. Together with Wdr20 and Usp12-46 required for wg/wingless-mediated signaling in the wing imaginal disc and for wg/wingless-dependent regulation of intestinal stem cell proliferation. In Drosophila persimilis (Fruit fly), this protein is WD repeat-containing protein 48 homolog.